The chain runs to 402 residues: GTPase Obg (402 aa).

The Obg domain occupies 1 to 159 (MRFIDEAIVT…KELKFELKVV (159 aa)). In terms of domain architecture, OBG-type G spans 160–334 (ADVGLIGLPN…VKYHLMNEIE (175 aa)). GTP is bound by residues 166–173 (GLPNAGKS), 191–195 (FTTLV), 213–216 (DIPG), 283–286 (NKID), and 315–317 (STL). The Mg(2+) site is built by serine 173 and threonine 193. The disordered stretch occupies residues 382 to 402 (AAFNNELDDDDDDGVEVVYAP). Acidic residues predominate over residues 387–396 (ELDDDDDDGV).

Belongs to the TRAFAC class OBG-HflX-like GTPase superfamily. OBG GTPase family. As to quaternary structure, monomer. Mg(2+) is required as a cofactor.

It localises to the cytoplasm. Its function is as follows. An essential GTPase which binds GTP, GDP and possibly (p)ppGpp with moderate affinity, with high nucleotide exchange rates and a fairly low GTP hydrolysis rate. Plays a role in control of the cell cycle, stress response, ribosome biogenesis and in those bacteria that undergo differentiation, in morphogenesis control. This is GTPase Obg from Psychrobacter sp. (strain PRwf-1).